The chain runs to 189 residues: Segregation and condensation protein B (189 aa).

The protein belongs to the ScpB family. In terms of assembly, homodimer. Homodimerization may be required to stabilize the binding of ScpA to the Smc head domains. Component of a cohesin-like complex composed of ScpA, ScpB and the Smc homodimer, in which ScpA and ScpB bind to the head domain of Smc. The presence of the three proteins is required for the association of the complex with DNA.

Its subcellular location is the cytoplasm. Functionally, participates in chromosomal partition during cell division. May act via the formation of a condensin-like complex containing Smc and ScpA that pull DNA away from mid-cell into both cell halves. This is Segregation and condensation protein B from Lachnoclostridium phytofermentans (strain ATCC 700394 / DSM 18823 / ISDg) (Clostridium phytofermentans).